Reading from the N-terminus, the 176-residue chain is MLTTIAIQIPDGSAIFVLLTFILLMFILKKLAWGPITKIMDARANQINDDLDSAAKSKNEAKKLQTVADTNLKESQSQATALMENARKSSEEQSKKIVDLAQAHADSINRQAQIDARQIKDDALDSAKDEIADLSVSIASRIIGKEITASKHKALIDDFISELEKQQENSPVKEKS.

The helical transmembrane segment at 7–27 (IQIPDGSAIFVLLTFILLMFI) threads the bilayer. The disordered stretch occupies residues 75–94 (SQSQATALMENARKSSEEQS). A compositionally biased stretch (basic and acidic residues) spans 85 to 94 (NARKSSEEQS).

The protein belongs to the ATPase B chain family. As to quaternary structure, F-type ATPases have 2 components, F(1) - the catalytic core - and F(0) - the membrane proton channel. F(1) has five subunits: alpha(3), beta(3), gamma(1), delta(1), epsilon(1). F(0) has three main subunits: a(1), b(2) and c(10-14). The alpha and beta chains form an alternating ring which encloses part of the gamma chain. F(1) is attached to F(0) by a central stalk formed by the gamma and epsilon chains, while a peripheral stalk is formed by the delta and b chains.

The protein localises to the cell membrane. F(1)F(0) ATP synthase produces ATP from ADP in the presence of a proton or sodium gradient. F-type ATPases consist of two structural domains, F(1) containing the extramembraneous catalytic core and F(0) containing the membrane proton channel, linked together by a central stalk and a peripheral stalk. During catalysis, ATP synthesis in the catalytic domain of F(1) is coupled via a rotary mechanism of the central stalk subunits to proton translocation. Functionally, component of the F(0) channel, it forms part of the peripheral stalk, linking F(1) to F(0). The protein is ATP synthase subunit b of Oenococcus oeni (strain ATCC BAA-331 / PSU-1).